An 890-amino-acid polypeptide reads, in one-letter code: Protein Ycf2 (890 aa).

Residue 385-392 participates in ATP binding; sequence GPPGTGKT.

Belongs to the Ycf2 family.

Its subcellular location is the plastid. The protein resides in the chloroplast stroma. In terms of biological role, probable ATPase of unknown function. Its presence in a non-photosynthetic plant (Epifagus virginiana) and experiments in tobacco indicate that it has an essential function which is probably not related to photosynthesis. The protein is Protein Ycf2 (ycf2) of Mesostigma viride (Green alga).